Reading from the N-terminus, the 157-residue chain is Serine-protein kinase RsbW (157 aa).

This sequence belongs to the anti-sigma-factor family.

It catalyses the reaction L-seryl-[protein] + ATP = O-phospho-L-seryl-[protein] + ADP + H(+). The enzyme catalyses L-threonyl-[protein] + ATP = O-phospho-L-threonyl-[protein] + ADP + H(+). Negative regulator of sigma-B activity. Phosphorylates and inactivates its specific antagonist protein, RsbV. Upon phosphorylation of RsbV, RsbW is released and binds to sigma-B, thereby blocking its ability to form an RNA polymerase holoenzyme (E-sigma-B). This is Serine-protein kinase RsbW from Listeria innocua serovar 6a (strain ATCC BAA-680 / CLIP 11262).